Consider the following 624-residue polypeptide: Threonine--tRNA ligase (624 aa).

Residues 1-143 (MRLLFIHADE…SRTVTPEAAE (143 aa)) are editing domain. The segment at 197 to 499 (AHVKLMREKE…EQEGKLPTLP (303 aa)) is catalytic. 3 residues coordinate Zn(2+): Cys289, His340, and His467. Residues 598–624 (LERETEGKPRVPLTIPDRLSRRPRFGR) are disordered.

It belongs to the class-II aminoacyl-tRNA synthetase family. As to quaternary structure, homodimer. The cofactor is Zn(2+).

The protein resides in the cytoplasm. It carries out the reaction tRNA(Thr) + L-threonine + ATP = L-threonyl-tRNA(Thr) + AMP + diphosphate + H(+). In terms of biological role, catalyzes the attachment of threonine to tRNA(Thr) in a two-step reaction: L-threonine is first activated by ATP to form Thr-AMP and then transferred to the acceptor end of tRNA(Thr). Also edits incorrectly charged L-seryl-tRNA(Thr). The chain is Threonine--tRNA ligase from Methanopyrus kandleri (strain AV19 / DSM 6324 / JCM 9639 / NBRC 100938).